The primary structure comprises 356 residues: Glutamine synthetase cytosolic isozyme 2 (356 aa).

A GS beta-grasp domain is found at 19–99 (IIAEYIWIGG…VMCDTYTPAG (81 aa)). A GS catalytic domain is found at 106–356 (KRHNAAKIFS…IAESTILWKP (251 aa)).

This sequence belongs to the glutamine synthetase family. As to quaternary structure, homooctamer.

Its subcellular location is the cytoplasm. The enzyme catalyses L-glutamate + NH4(+) + ATP = L-glutamine + ADP + phosphate + H(+). In Vitis vinifera (Grape), this protein is Glutamine synthetase cytosolic isozyme 2 (GS1-2).